The sequence spans 469 residues: MHSFPPLLLLLFWGVVSHSFPATLETQEQDVDLVQKYLEKYYNLKNDGRQVEKRRNSGPVVEKLKQMQEFFGLKVTGKPDAETLKVMKQPRCGVPDVAQFVLTEGNPRWEQTHLTYRIENYTPDLPRADVDHAIEKAFQLWSNVTPLTFTKVSEGQADIMISFVRGDHRDNSPFDGPGGNLAHAFQPGPGIGGDAHFDEDERWTNNFREYNLHRVAAHELGHSLGLSHSTDIGALMYPSYTFSGDVQLAQDDIDGIQAIYGRSQNPVQPIGPQTPKACDSKLTFDAITTIRGEVMFFKDRFYMRTNPFYPEVELNFISVFWPQLPNGLEAAYEFADRDEVRFFKGNKYWAVQGQNVLHGYPKDIYSSFGFPRTVKHIDAALSEENTGKTYFFVANKYWRYDEYKRSMDPGYPKMIAHDFPGIGHKVDAVFMKDGFFYFFHGTRQYKFDPKTKRILTLQKANSWFNCRKN.

Residues 1-19 form the signal peptide; it reads MHSFPPLLLLLFWGVVSHS. A propeptide spans 20–99 (activation peptide); that stretch reads FPATLETQEQ…PRCGVPDVAQ (80 aa). A Phosphoserine modification is found at serine 57. The short motif at 90 to 97 is the Cysteine switch element; that stretch reads PRCGVPDV. Cysteine 92 contacts Zn(2+). Positions 98–276 are metalloprotease; the sequence is AQFVLTEGNP…VQPIGPQTPK (179 aa). N-linked (GlcNAc...) asparagine glycosylation is present at asparagine 120. The Ca(2+) site is built by aspartate 124 and aspartate 158. The Zn(2+) site is built by histidine 168 and aspartate 170. Residues aspartate 175, glycine 176, glycine 178, and asparagine 180 each contribute to the Ca(2+) site. Residue histidine 183 participates in Zn(2+) binding. 3 residues coordinate Ca(2+): glycine 190, glycine 192, and aspartate 194. Histidine 196 contributes to the Zn(2+) binding site. Ca(2+)-binding residues include aspartate 198, glutamate 199, and glutamate 201. Residue histidine 218 coordinates Zn(2+). Residue glutamate 219 is part of the active site. Zn(2+) contacts are provided by histidine 222 and histidine 228. Residue threonine 274 is modified to Phosphothreonine. Hemopexin repeat units lie at residues 275-324, 325-371, 374-422, and 423-466; these read PKAC…WPQL, PNGL…FGFP, VKHI…FPGI, and GHKV…WFNC. Cysteine 278 and cysteine 466 are disulfide-bonded. Ca(2+) contacts are provided by aspartate 285 and glutamate 329. Tyrosine 360 carries the phosphotyrosine; by PKDCC modification. Residues aspartate 378 and aspartate 427 each contribute to the Ca(2+) site.

It belongs to the peptidase M10A family. In terms of assembly, (Microbial infection) Interacts with HIV-1 Tat. Requires Ca(2+) as cofactor. The cofactor is Zn(2+). Post-translationally, undergoes autolytic cleavage to two major forms (22 kDa and 27 kDa). A minor form (25 kDa) is the glycosylated form of the 22 kDa form. The 27 kDa form has no activity while the 22/25 kDa form can act as activator for collagenase. In terms of processing, tyrosine phosphorylated in platelets by PKDCC/VLK.

It is found in the secreted. It localises to the extracellular space. The protein localises to the extracellular matrix. The catalysed reaction is Cleavage of the triple helix of collagen at about three-quarters of the length of the molecule from the N-terminus, at 775-Gly-|-Ile-776 in the alpha1(I) chain. Cleaves synthetic substrates and alpha-macroglobulins at bonds where P1' is a hydrophobic residue.. Its activity is regulated as follows. Can be activated without removal of the activation peptide. Cleaves collagens of types I, II, and III at one site in the helical domain. Also cleaves collagens of types VII and X. In case of HIV infection, interacts and cleaves the secreted viral Tat protein, leading to a decrease in neuronal Tat's mediated neurotoxicity. The chain is Interstitial collagenase (MMP1) from Homo sapiens (Human).